A 400-amino-acid chain; its full sequence is Chalcone synthase C2 (400 aa).

Residue Cys-168 is part of the active site.

The protein belongs to the thiolase-like superfamily. Chalcone/stilbene synthases family.

It catalyses the reaction (E)-4-coumaroyl-CoA + 3 malonyl-CoA + 3 H(+) = 2',4,4',6'-tetrahydroxychalcone + 3 CO2 + 4 CoA. The protein operates within secondary metabolite biosynthesis; flavonoid biosynthesis. The primary product of this enzyme is 4,2',4',6'-tetrahydroxychalcone (also termed naringenin-chalcone or chalcone) which can under specific conditions spontaneously isomerize into naringenin. The polypeptide is Chalcone synthase C2 (C2) (Zea mays (Maize)).